The chain runs to 340 residues: Lysophospholipase L2 (340 aa).

Its subcellular location is the cell inner membrane. It carries out the reaction a 1-acyl-sn-glycero-3-phosphocholine + H2O = sn-glycerol 3-phosphocholine + a fatty acid + H(+). This Escherichia coli O6:H1 (strain CFT073 / ATCC 700928 / UPEC) protein is Lysophospholipase L2 (pldB).